A 450-amino-acid polypeptide reads, in one-letter code: Benzene 1,2-dioxygenase subunit alpha (450 aa).

The Rieske domain maps to 54 to 163 (WLLLGHETQI…VETYKGLIFA (110 aa)). [2Fe-2S] cluster-binding residues include cysteine 96, histidine 98, cysteine 116, and histidine 119. Histidine 222 and histidine 228 together coordinate Fe cation.

This sequence belongs to the bacterial ring-hydroxylating dioxygenase alpha subunit family. In terms of assembly, this dioxygenase system consists of four proteins: the two subunits of the hydroxylase component (BnzA and BnzB), a ferredoxin (BnzC) and a ferredoxin reductase (BnzD). The cofactor is [2Fe-2S] cluster. Fe cation is required as a cofactor.

The catalysed reaction is benzene + NADH + O2 + H(+) = cis-1,2-dihydrobenzene-1,2-diol + NAD(+). It carries out the reaction toluene + NADH + O2 + H(+) = (1S,2R)-3-methylcyclohexa-3,5-diene-1,2-diol + NAD(+). The protein operates within aromatic compound metabolism; benzene degradation; catechol from benzene: step 1/2. It functions in the pathway xenobiotic degradation; toluene degradation. Its pathway is xenobiotic degradation; xylene degradation. In terms of biological role, catalyzes both the oxidation of benzene and toluene. In Pseudomonas putida (strain ATCC 700007 / DSM 6899 / JCM 31910 / BCRC 17059 / LMG 24140 / F1), this protein is Benzene 1,2-dioxygenase subunit alpha (bnzA).